The chain runs to 418 residues: Voltage-gated ClC-type chloride channel ClcB (418 aa).

10 helical membrane-spanning segments follow: residues 5–25 (LLIA…FRHA), 54–74 (LLTP…WQKF), 146–166 (LWIA…PLAG), 168–188 (LFIA…PVII), 222–242 (ALII…LTLM), 258–278 (WQLA…PAVW), 291–311 (APPL…AVLA), 316–336 (GAPG…GMLY), 352–372 (LLLG…APIM), and 380–400 (MTGE…ASVI).

This sequence belongs to the chloride channel (TC 2.A.49) family. ClcB subfamily.

Its subcellular location is the cell inner membrane. Its function is as follows. Probably acts as an electrical shunt for an outwardly-directed proton pump that is linked to amino acid decarboxylation, as part of the extreme acid resistance (XAR) response. This is Voltage-gated ClC-type chloride channel ClcB from Shigella boydii serotype 18 (strain CDC 3083-94 / BS512).